Reading from the N-terminus, the 277-residue chain is Putative phosphoenolpyruvate synthase regulatory protein (277 aa).

157-164 contributes to the ADP binding site; sequence GVSRCGKT.

It belongs to the pyruvate, phosphate/water dikinase regulatory protein family. PSRP subfamily.

It carries out the reaction [pyruvate, water dikinase] + ADP = [pyruvate, water dikinase]-phosphate + AMP + H(+). It catalyses the reaction [pyruvate, water dikinase]-phosphate + phosphate + H(+) = [pyruvate, water dikinase] + diphosphate. In terms of biological role, bifunctional serine/threonine kinase and phosphorylase involved in the regulation of the phosphoenolpyruvate synthase (PEPS) by catalyzing its phosphorylation/dephosphorylation. In Photobacterium profundum (strain SS9), this protein is Putative phosphoenolpyruvate synthase regulatory protein.